The primary structure comprises 306 residues: ATP phosphoribosyltransferase (306 aa).

The protein belongs to the ATP phosphoribosyltransferase family.

Its subcellular location is the cytoplasm. The enzyme catalyses 1-(5-phospho-beta-D-ribosyl)-ATP + diphosphate = 5-phospho-alpha-D-ribose 1-diphosphate + ATP. Its pathway is amino-acid biosynthesis; L-histidine biosynthesis; L-histidine from 5-phospho-alpha-D-ribose 1-diphosphate: step 1/9. Catalyzes the condensation of ATP and 5-phosphoribose 1-diphosphate to form N'-(5'-phosphoribosyl)-ATP (PR-ATP). Has a crucial role in the pathway because the rate of histidine biosynthesis seems to be controlled primarily by regulation of the enzymatic activity. This is ATP phosphoribosyltransferase (HIS1) from Candida glabrata (strain ATCC 2001 / BCRC 20586 / JCM 3761 / NBRC 0622 / NRRL Y-65 / CBS 138) (Yeast).